A 486-amino-acid chain; its full sequence is Protein DETOXIFICATION 53 (486 aa).

12 consecutive transmembrane segments (helical) span residues 15 to 35 (CPIV…MWFL), 45 to 65 (GGAL…KGLS), 94 to 114 (LLIV…PIFL), 130 to 150 (MLFF…RTFL), 159 to 179 (LTIS…VFVV), 187 to 207 (GVAI…LVYT), 240 to 260 (AISV…CGLL), 267 to 287 (VAAM…PFAI), 312 to 332 (VIGL…VTAL), 346 to 366 (ILGL…GNSP), 386 to 406 (VNLC…TFGF), and 413 to 433 (LWFG…YTLI). The segment at 448–474 (TSAAADKSHSEDETVHAEVQDDDDVSS) is disordered. Basic and acidic residues predominate over residues 453 to 466 (DKSHSEDETVHAEV).

Belongs to the multi antimicrobial extrusion (MATE) (TC 2.A.66.1) family.

It is found in the membrane. The polypeptide is Protein DETOXIFICATION 53 (Arabidopsis thaliana (Mouse-ear cress)).